We begin with the raw amino-acid sequence, 773 residues long: Elongin-A (773 aa).

The TFIIS N-terminal domain maps to 4–79 (ESALQVVEKL…AQWKKLVPVE (76 aa)). The span at 79–93 (ERNNEAEDQDFEKSN) shows a compositional bias: basic and acidic residues. Residues 79-480 (ERNNEAEDQD…PRKVPTDVLP (402 aa)) are disordered. Positions 112–124 (YQESWQASGSQPY) are enriched in polar residues. A compositionally biased stretch (basic and acidic residues) spans 136–156 (LPELERPHKVAHGHERRDERK). Low complexity predominate over residues 162–174 (SPPYSSDPESSDY). Ser195 carries the post-translational modification Phosphoserine. Positions 239–248 (KPHKSSHKEK) are enriched in basic residues. Basic and acidic residues-rich tracts occupy residues 249–265 (RPVDARGDEKSSVMGRE) and 271–304 (SSKEESRRLLSEDSAKEKLPSSVVKKEKDREGNS). At Ser310 the chain carries Phosphoserine. 2 stretches are compositionally biased toward basic and acidic residues: residues 317–339 (SDNHFKKPKHKDSEKIKSDKNKQ) and 368–380 (QEGKVRTNSDRKS). Phosphoserine is present on residues Ser380 and Ser383. An N6-acetyllysine modification is found at Lys430. Ser515 is subject to Phosphoserine. The activation domain stretch occupies residues 521–680 (EAGFTGRRMN…PPRDVRRRQE (160 aa)). Positions 549 to 558 (TLHQQCIRVL) are BC-box. Residues 565–609 (IFEVGGVPYSVLEPVLERCTPDQLYRIEECNHVLIEETDQLWKVH) form the F-box domain. The interval 671 to 747 (PPRDVRRRQE…VASSSVSYDP (77 aa)) is disordered. The segment covering 704 to 718 (SSHVPASNSSSSFHS) has biased composition (low complexity). Residues 728 to 744 (PSTSSAHLAPVASSSVS) are compositionally biased toward polar residues.

As to quaternary structure, heterotrimer of an A (ELOA, ELOA2 or ELOA3P), ELOB and ELOC subunit. Part of a multisubunit ubiquitin ligase complex consisting of elongin BC complex (ELOB and ELOC), elongin A/ELOA, RBX1 and CUL5. Interacts with ERCC6; the interaction is induced by DNA damaging agents or inhibitors of RNA polymerase II elongation. Interacts (via BC-box) with CUL5.

It localises to the nucleus. Functionally, SIII, also known as elongin, is a general transcription elongation factor that increases the RNA polymerase II transcription elongation past template-encoded arresting sites. Subunit A is transcriptionally active and its transcription activity is strongly enhanced by binding to the dimeric complex of the SIII regulatory subunits B and C (elongin BC complex). In terms of biological role, as part of a multisubunit complex composed of elongin BC complex (ELOB and ELOC), elongin A/ELOA, RBX1 and CUL5; polyubiquitinates monoubiquitinated POLR2A. This chain is Elongin-A (Eloa), found in Rattus norvegicus (Rat).